Here is a 162-residue protein sequence, read N- to C-terminus: N5-carboxyaminoimidazole ribonucleotide mutase (162 aa).

The substrate site is built by serine 11, aspartate 14, and arginine 41.

It belongs to the AIR carboxylase family. Class I subfamily.

It catalyses the reaction 5-carboxyamino-1-(5-phospho-D-ribosyl)imidazole + H(+) = 5-amino-1-(5-phospho-D-ribosyl)imidazole-4-carboxylate. The protein operates within purine metabolism; IMP biosynthesis via de novo pathway; 5-amino-1-(5-phospho-D-ribosyl)imidazole-4-carboxylate from 5-amino-1-(5-phospho-D-ribosyl)imidazole (N5-CAIR route): step 2/2. In terms of biological role, catalyzes the conversion of N5-carboxyaminoimidazole ribonucleotide (N5-CAIR) to 4-carboxy-5-aminoimidazole ribonucleotide (CAIR). This chain is N5-carboxyaminoimidazole ribonucleotide mutase, found in Brucella melitensis biotype 1 (strain ATCC 23456 / CCUG 17765 / NCTC 10094 / 16M).